We begin with the raw amino-acid sequence, 210 residues long: ATP-dependent dethiobiotin synthetase BioD (210 aa).

Residue 13 to 18 (GIGKTV) participates in ATP binding. Thr17 lines the Mg(2+) pocket. Residue Lys33 is part of the active site. Position 101 (Glu101) interacts with Mg(2+). Residues 101-104 (EGAG) and 185-187 (PWL) each bind ATP.

Belongs to the dethiobiotin synthetase family. Homodimer. Requires Mg(2+) as cofactor.

The protein localises to the cytoplasm. It catalyses the reaction (7R,8S)-7,8-diammoniononanoate + CO2 + ATP = (4R,5S)-dethiobiotin + ADP + phosphate + 3 H(+). It participates in cofactor biosynthesis; biotin biosynthesis; biotin from 7,8-diaminononanoate: step 1/2. Its function is as follows. Catalyzes a mechanistically unusual reaction, the ATP-dependent insertion of CO2 between the N7 and N8 nitrogen atoms of 7,8-diaminopelargonic acid (DAPA, also called 7,8-diammoniononanoate) to form a ureido ring. This chain is ATP-dependent dethiobiotin synthetase BioD, found in Bradyrhizobium sp. (strain BTAi1 / ATCC BAA-1182).